A 433-amino-acid chain; its full sequence is Glutamate-1-semialdehyde 2,1-aminomutase (433 aa).

Position 270 is an N6-(pyridoxal phosphate)lysine (K270).

The protein belongs to the class-III pyridoxal-phosphate-dependent aminotransferase family. HemL subfamily. As to quaternary structure, homodimer. Pyridoxal 5'-phosphate is required as a cofactor.

Its subcellular location is the cytoplasm. The enzyme catalyses (S)-4-amino-5-oxopentanoate = 5-aminolevulinate. Its pathway is porphyrin-containing compound metabolism; protoporphyrin-IX biosynthesis; 5-aminolevulinate from L-glutamyl-tRNA(Glu): step 2/2. This chain is Glutamate-1-semialdehyde 2,1-aminomutase, found in Clostridium novyi (strain NT).